Reading from the N-terminus, the 466-residue chain is Aladin (466 aa).

5 WD repeats span residues 135-174 (WLNS…TTAT), 179-218 (PSQT…HLGR), 229-269 (PNNL…MQPL), 271-310 (RLGP…TTER), and 378-418 (LVGG…FDLQ).

It is found in the nucleus. The protein localises to the nuclear pore complex. The protein resides in the cytoplasm. Its subcellular location is the cytoskeleton. It localises to the spindle. Functionally, involved in mitotic spindle assembly. The chain is Aladin from Drosophila melanogaster (Fruit fly).